The chain runs to 164 residues: Thiol peroxidase (164 aa).

The Thioredoxin domain occupies 18–163 (INEGDFAPDF…FDAALAAYKN (146 aa)). The active-site Cysteine sulfenic acid (-SOH) intermediate is Cys60. Cys60 and Cys93 form a disulfide bridge.

It belongs to the peroxiredoxin family. Tpx subfamily. As to quaternary structure, homodimer.

The enzyme catalyses a hydroperoxide + [thioredoxin]-dithiol = an alcohol + [thioredoxin]-disulfide + H2O. Thiol-specific peroxidase that catalyzes the reduction of hydrogen peroxide and organic hydroperoxides to water and alcohols, respectively. Plays a role in cell protection against oxidative stress by detoxifying peroxides. This Staphylococcus aureus (strain COL) protein is Thiol peroxidase.